The sequence spans 375 residues: Actin, cytoplasmic (375 aa).

This sequence belongs to the actin family.

The protein localises to the cytoplasm. The protein resides in the cytoskeleton. It carries out the reaction ATP + H2O = ADP + phosphate + H(+). Its function is as follows. Actins are highly conserved proteins that are involved in various types of cell motility and are ubiquitously expressed in all eukaryotic cells. The polypeptide is Actin, cytoplasmic (Oxytricha trifallax (Sterkiella histriomuscorum)).